The primary structure comprises 165 residues: Lipoprotein signal peptidase (165 aa).

3 consecutive transmembrane segments (helical) span residues 9-29 (FLAISFFVLIDWVSKLAVLLY), 69-89 (KYFLFAIRIAIILGILAFLFL), and 98-118 (IRFSLILLCSGAIGNVGDILF). Residues Asp-124 and Asp-142 contribute to the active site. Residues 133 to 153 (WYFPTFNFADIFISLGTFIFV) traverse the membrane as a helical segment.

It belongs to the peptidase A8 family.

Its subcellular location is the cell inner membrane. It carries out the reaction Release of signal peptides from bacterial membrane prolipoproteins. Hydrolyzes -Xaa-Yaa-Zaa-|-(S,diacylglyceryl)Cys-, in which Xaa is hydrophobic (preferably Leu), and Yaa (Ala or Ser) and Zaa (Gly or Ala) have small, neutral side chains.. Its pathway is protein modification; lipoprotein biosynthesis (signal peptide cleavage). This protein specifically catalyzes the removal of signal peptides from prolipoproteins. In Chlamydia caviae (strain ATCC VR-813 / DSM 19441 / 03DC25 / GPIC) (Chlamydophila caviae), this protein is Lipoprotein signal peptidase.